A 289-amino-acid chain; its full sequence is MNMLEKIQSQLEHLSKSERKVAEVILASPDNAIHSSIAAMALEANVSEPTVNRFCRSMDTRGFPDFKLHLAQSLANGTPYVNRNVNEDDSVESYTGKIFESAMATLDHVRHSLDKSAINRAVDLLTQAKKIAFFGLGSSAAVAHDAMNKFFRFNVPVVYSDDIVLQRMSCMNCSDGDVVVLISHTGRTKNLVELAQLARENDAMVIALTSAGTPLAREATLAITLDVPEDTDIYMPMVSRLAQLTVIDVLATGFTLRRGAKFRDNLKRVKEALKESRFDKQLLNLSDDR.

One can recognise an HTH rpiR-type domain in the interval 1-77 (MNMLEKIQSQ…LHLAQSLANG (77 aa)). Residues 37-56 (IAAMALEANVSEPTVNRFCR) constitute a DNA-binding region (H-T-H motif). Residues 121 to 260 (AVDLLTQAKK…ATGFTLRRGA (140 aa)) form the SIS domain.

In terms of biological role, represses the expression of the hex regulon (zwf, eda, glp and gap). This Escherichia coli (strain K12) protein is HTH-type transcriptional regulator HexR (hexR).